A 1139-amino-acid polypeptide reads, in one-letter code: GRIP and coiled-coil domain-containing protein (1139 aa).

The disordered stretch occupies residues 366-388 (NDDSQINNNVSNKVNSPDDDPNT). A compositionally biased stretch (polar residues) spans 369 to 380 (SQINNNVSNKVN). Coiled coils occupy residues 472 to 648 (VTKL…INNE) and 758 to 877 (LYIL…ETQQ). The tract at residues 1004–1024 (NEQENDNNNNNNNNNNNNNVE) is disordered. The span at 1009-1022 (DNNNNNNNNNNNNN) shows a compositional bias: low complexity. Residues 1043–1084 (YKKIRKKLETYEILLNEQQEGKKKMTEEINSLKNQVKNYESI) are a coiled coil. Residues 1084–1135 (INGNYQHIIYQKNILSNFIAQIPSRIQVDDYVSVIFNSFNFSNQEIEAINIK) form the GRIP domain.

This is GRIP and coiled-coil domain-containing protein from Plasmodium falciparum (isolate 3D7).